Reading from the N-terminus, the 223-residue chain is Phosphoribosylformylglycinamidine synthase subunit PurQ (223 aa).

The 221-residue stretch at 3 to 223 folds into the Glutamine amidotransferase type-1 domain; sequence FAVLVFPGSN…MVKSWREQHV (221 aa). Catalysis depends on cysteine 85, which acts as the Nucleophile. Catalysis depends on residues histidine 193 and glutamate 195.

As to quaternary structure, part of the FGAM synthase complex composed of 1 PurL, 1 PurQ and 2 PurS subunits.

It is found in the cytoplasm. It catalyses the reaction N(2)-formyl-N(1)-(5-phospho-beta-D-ribosyl)glycinamide + L-glutamine + ATP + H2O = 2-formamido-N(1)-(5-O-phospho-beta-D-ribosyl)acetamidine + L-glutamate + ADP + phosphate + H(+). The enzyme catalyses L-glutamine + H2O = L-glutamate + NH4(+). The protein operates within purine metabolism; IMP biosynthesis via de novo pathway; 5-amino-1-(5-phospho-D-ribosyl)imidazole from N(2)-formyl-N(1)-(5-phospho-D-ribosyl)glycinamide: step 1/2. Functionally, part of the phosphoribosylformylglycinamidine synthase complex involved in the purines biosynthetic pathway. Catalyzes the ATP-dependent conversion of formylglycinamide ribonucleotide (FGAR) and glutamine to yield formylglycinamidine ribonucleotide (FGAM) and glutamate. The FGAM synthase complex is composed of three subunits. PurQ produces an ammonia molecule by converting glutamine to glutamate. PurL transfers the ammonia molecule to FGAR to form FGAM in an ATP-dependent manner. PurS interacts with PurQ and PurL and is thought to assist in the transfer of the ammonia molecule from PurQ to PurL. In Staphylococcus aureus (strain USA300), this protein is Phosphoribosylformylglycinamidine synthase subunit PurQ.